A 334-amino-acid chain; its full sequence is NmrA-like family domain-containing oxidoreductase lnaB (334 aa).

NADP(+) contacts are provided by residues 12–17 (GGTGKQ), 38–42 (RNAQS), 59–60 (DG), 80–82 (INS), lysine 138, and 162–165 (FLEN).

This sequence belongs to the NmrA-type oxidoreductase family.

Its pathway is secondary metabolite biosynthesis. Functionally, nmrA-like family domain-containing oxidoreductase; part of the lna gene cluster that mediates the biosynthesis of diastereomeric piperazines. Lna and lnb clusters encode sets of enzymes that produce overlapping sets of previously undescribed metabolites such as piperazinomycin-like metabolites or morpholine. The lna and lnb biosynthetic pathways appear to be part of a signaling network that controls the formation of sclerotia, a resilient overwintering structure. One primary function of the non-canonical nonribosomal peptide synthetases lnaA and lnbA consists in the reduction of L-tyrosine. The presence in the clusters of tailoring enzymes such as the oxidoreductases lnaB, lnbB, lnaE or lnbE, as well as of the cytochrome P450 monooxygenases lnaC, lnaD, or lnbC, might explain formation of various diastereomeric piperazines. This chain is NmrA-like family domain-containing oxidoreductase lnaB, found in Aspergillus flavus (strain ATCC 200026 / FGSC A1120 / IAM 13836 / NRRL 3357 / JCM 12722 / SRRC 167).